A 211-amino-acid chain; its full sequence is Holliday junction branch migration complex subunit RuvA (211 aa).

The tract at residues 1–63 (MIASLRGTVI…EDSQTLYVFK (63 aa)) is domain I. Residues 64-142 (DADEKRAFAT…DLGEIADTGA (79 aa)) are domain II. Positions 143–157 (VGAAGAVGDGGDGQA) are flexible linker. The tract at residues 158-211 (VAPDVREQVLEALVGLGFTESKAGTTIEAVLSQWSAPQAPDASGLLRASLAAIK) is domain III.

The protein belongs to the RuvA family. Homotetramer. Forms an RuvA(8)-RuvB(12)-Holliday junction (HJ) complex. HJ DNA is sandwiched between 2 RuvA tetramers; dsDNA enters through RuvA and exits via RuvB. An RuvB hexamer assembles on each DNA strand where it exits the tetramer. Each RuvB hexamer is contacted by two RuvA subunits (via domain III) on 2 adjacent RuvB subunits; this complex drives branch migration. In the full resolvosome a probable DNA-RuvA(4)-RuvB(12)-RuvC(2) complex forms which resolves the HJ.

It localises to the cytoplasm. Functionally, the RuvA-RuvB-RuvC complex processes Holliday junction (HJ) DNA during genetic recombination and DNA repair, while the RuvA-RuvB complex plays an important role in the rescue of blocked DNA replication forks via replication fork reversal (RFR). RuvA specifically binds to HJ cruciform DNA, conferring on it an open structure. The RuvB hexamer acts as an ATP-dependent pump, pulling dsDNA into and through the RuvAB complex. HJ branch migration allows RuvC to scan DNA until it finds its consensus sequence, where it cleaves and resolves the cruciform DNA. The protein is Holliday junction branch migration complex subunit RuvA of Corynebacterium jeikeium (strain K411).